The sequence spans 344 residues: Nicotinate-nucleotide--dimethylbenzimidazole phosphoribosyltransferase (344 aa).

Residue glutamate 310 is the Proton acceptor of the active site.

This sequence belongs to the CobT family.

The catalysed reaction is 5,6-dimethylbenzimidazole + nicotinate beta-D-ribonucleotide = alpha-ribazole 5'-phosphate + nicotinate + H(+). It participates in nucleoside biosynthesis; alpha-ribazole biosynthesis; alpha-ribazole from 5,6-dimethylbenzimidazole: step 1/2. Functionally, catalyzes the synthesis of alpha-ribazole-5'-phosphate from nicotinate mononucleotide (NAMN) and 5,6-dimethylbenzimidazole (DMB). The sequence is that of Nicotinate-nucleotide--dimethylbenzimidazole phosphoribosyltransferase from Shewanella amazonensis (strain ATCC BAA-1098 / SB2B).